The following is a 394-amino-acid chain: Phosphoglycerate kinase (394 aa).

Substrate is bound by residues 21–23 (DFN), arginine 36, 59–62 (HLGR), arginine 118, and arginine 151. Phosphoserine is present on serine 183. An ATP-binding site is contributed by lysine 201. Threonine 299 is modified (phosphothreonine). ATP is bound by residues glutamate 323 and 350–353 (GGDS).

Belongs to the phosphoglycerate kinase family. Monomer.

It is found in the cytoplasm. The catalysed reaction is (2R)-3-phosphoglycerate + ATP = (2R)-3-phospho-glyceroyl phosphate + ADP. The protein operates within carbohydrate degradation; glycolysis; pyruvate from D-glyceraldehyde 3-phosphate: step 2/5. The sequence is that of Phosphoglycerate kinase from Geobacillus sp. (strain WCH70).